The chain runs to 333 residues: Testin-2 (333 aa).

An N-terminal signal peptide occupies residues 1 to 17 (MIAVLFLAILCLEVDST). 3 disulfide bridges follow: C135/C178, C169/C211, and C269/C322. An N-linked (GlcNAc...) asparagine glycan is attached at N173. Catalysis depends on residues H276 and N300.

Belongs to the peptidase C1 family. As to expression, sertoli cells.

Its subcellular location is the secreted. The polypeptide is Testin-2 (Testin) (Rattus norvegicus (Rat)).